We begin with the raw amino-acid sequence, 366 residues long: GDSL esterase/lipase LTL1 (366 aa).

The first 27 residues, 1–27, serve as a signal peptide directing secretion; it reads MNINCSPLGFLISLFFIVTFLAPQVKS. Serine 36 acts as the Nucleophile in catalysis. Asparagine 117 is a glycosylation site (N-linked (GlcNAc...) asparagine). Catalysis depends on residues aspartate 326 and histidine 329. Residue asparagine 354 is glycosylated (N-linked (GlcNAc...) asparagine).

It belongs to the 'GDSL' lipolytic enzyme family. In terms of assembly, binds to VLG at the endomembrane system. Mostly expressed in flowers, reproductive stems and rosette leaves, and, to a lower extent, in roots.

Its subcellular location is the secreted. In terms of biological role, involved in the mechanisms of salt tolerance. Mediates resistance to LiCl and NaCl. The polypeptide is GDSL esterase/lipase LTL1 (Arabidopsis thaliana (Mouse-ear cress)).